The primary structure comprises 30 residues: Dendrotoxin A (30 aa).

An intrachain disulfide couples Cys-3 to Cys-22.

The protein belongs to the three-finger toxin family. Short-chain subfamily. Acn-esterase inhibitor sub-subfamily. Post-translationally, contains 4 disulfide bonds. In terms of tissue distribution, expressed by the venom gland.

The protein resides in the secreted. Its function is as follows. Inhibits acetylcholinesterase. Has been described to inhibit both the slowly and the rapidly inactivating phases of potassium efflux. This is Dendrotoxin A from Dendroaspis angusticeps (Eastern green mamba).